Reading from the N-terminus, the 394-residue chain is Endothelial cell-selective adhesion molecule (394 aa).

The first 29 residues, 1–29, serve as a signal peptide directing secretion; that stretch reads MILQAGTPETSLLRVLFLGLSTLAAFSRA. Topologically, residues 30-251 are extracellular; sequence QMELHVPPGL…LDVMTGSKAA (222 aa). The region spanning 37 to 146 is the Ig-like V-type domain; sequence PGLNKLEAVE…EGKSIGHSIK (110 aa). N-linked (GlcNAc...) asparagine glycans are attached at residues asparagine 111, asparagine 172, asparagine 216, and asparagine 239. The Ig-like C2-type domain maps to 159–243; the sequence is PSCSLQGVPY…GFAKCNVTLD (85 aa). Cysteine 177 and cysteine 227 are oxidised to a cystine. The helical transmembrane segment at 252-272 threads the bilayer; sequence VVAGAVVGTFVGLVLIAGLVL. The Cytoplasmic segment spans residues 273–394; that stretch reads LYQRRSKTLE…PAQSQAGSLV (122 aa). A Phosphoserine modification is found at serine 304. Composition is skewed to polar residues over residues 304–318 and 335–347; these read SDTISKNGTLSSVTS and FTPTPSVSSQALS. The interval 304 to 372 is disordered; it reads SDTISKNGTL…SLTPGGVSSS (69 aa). A phosphothreonine mark is found at threonine 336 and threonine 338. Residues serine 340, serine 343, serine 348, and serine 375 each carry the phosphoserine modification.

Interacts with MAGI1. As to expression, highly expressed in the heart and lung. Weakly expressed in the kidney and skin. Expression is restricted to the vascular endothelial cells. Expressed in the kidney, heart and tongue (at protein level). Also expressed on megakaryocytes and activated platelets.

Its subcellular location is the cell junction. It localises to the adherens junction. It is found in the tight junction. The protein resides in the cell membrane. Can mediate aggregation most likely through a homophilic molecular interaction. The chain is Endothelial cell-selective adhesion molecule (Esam) from Mus musculus (Mouse).